Consider the following 443-residue polypeptide: 23S rRNA (uracil(1939)-C(5))-methyltransferase RlmD (443 aa).

Residues 4–66 (QNRFDRTSFQ…RHFDEARVVE (63 aa)) form the TRAM domain. The [4Fe-4S] cluster site is built by C79, C85, C88, and C167. Residues Q275, F304, N309, E325, D352, and D373 each coordinate S-adenosyl-L-methionine. The active-site Nucleophile is C399.

This sequence belongs to the class I-like SAM-binding methyltransferase superfamily. RNA M5U methyltransferase family. RlmD subfamily.

The enzyme catalyses uridine(1939) in 23S rRNA + S-adenosyl-L-methionine = 5-methyluridine(1939) in 23S rRNA + S-adenosyl-L-homocysteine + H(+). Functionally, catalyzes the formation of 5-methyl-uridine at position 1939 (m5U1939) in 23S rRNA. The polypeptide is 23S rRNA (uracil(1939)-C(5))-methyltransferase RlmD (Xylella fastidiosa (strain Temecula1 / ATCC 700964)).